We begin with the raw amino-acid sequence, 120 residues long: Large ribosomal subunit protein uL18 (120 aa).

The protein belongs to the universal ribosomal protein uL18 family. As to quaternary structure, part of the 50S ribosomal subunit; part of the 5S rRNA/L5/L18/L25 subcomplex. Contacts the 5S and 23S rRNAs.

Functionally, this is one of the proteins that bind and probably mediate the attachment of the 5S RNA into the large ribosomal subunit, where it forms part of the central protuberance. The chain is Large ribosomal subunit protein uL18 from Chloroherpeton thalassium (strain ATCC 35110 / GB-78).